Here is a 151-residue protein sequence, read N- to C-terminus: Small ribosomal subunit protein uS15y (151 aa).

This sequence belongs to the universal ribosomal protein uS15 family.

This chain is Small ribosomal subunit protein uS15y (RPS13B), found in Arabidopsis thaliana (Mouse-ear cress).